The primary structure comprises 423 residues: Mannitol-1-phosphate 5-dehydrogenase (423 aa).

Residues Cys40, His69, and Glu70 each contribute to the Zn(2+) site.

Belongs to the zinc-containing alcohol dehydrogenase family. Zn(2+) is required as a cofactor.

The catalysed reaction is D-mannitol 1-phosphate + NAD(+) = beta-D-fructose 6-phosphate + NADH + H(+). In terms of biological role, seems to be involved in mannitol utilization. Complements an E.coli mtlD deletion mutant. The protein is Mannitol-1-phosphate 5-dehydrogenase of Aliivibrio fischeri (strain ATCC 700601 / ES114) (Vibrio fischeri).